A 540-amino-acid polypeptide reads, in one-letter code: MKIGTVAGTNDSTTTIATNDMVQEHVTNFTKELFGYIANGIGDDISSIARTMLGEVVEKIDDWQIERFQQSIQDDKISFTIQTDHSEKYSMLSGMRAHILRRNNNYQFIVTINSKNYGCSLDNTDINWCSIVYLLNNMTVNDNANDVAVTESYKPIWNWKISQYNVSDIKFETMIKPQFADRIYFSNCLPVDPTSTRPTYFGDTDGSVGAVLFALFATGHLGIMAEGENFLSQLLNIEDEVLNVLLRENFNEQLNTNVNTIISILNRRDIILESLQPYLVINKDAVTPCTFLGDQTGDRFSNICGDQFIIDLLKRIMSINENVHVLAGNHETNCNGNYMQNFTRMKPLDEDTYSGIKDYPVCFYDPKYKIMANHHGITFDDQRKRYIIGPITVSIDEMTNALDPVELAAIINKKHHAIINGKKFKTSRAISCRSFNRYFSVSTDYRPKLEALLACSQMLGINQVVAHNGNGGRERIGETGTVLGLNARDSKHAGRMFSMHNCQINPGAGPEITTPWKSYQHEKNRNGLMPLIRRRTMLQL.

This is an uncharacterized protein from Escherichia coli (strain K12).